Consider the following 275-residue polypeptide: Ribosomal RNA small subunit methyltransferase A (275 aa).

Residues Asn-27, Leu-29, Gly-54, Glu-76, Asp-102, and Asn-123 each coordinate S-adenosyl-L-methionine.

It belongs to the class I-like SAM-binding methyltransferase superfamily. rRNA adenine N(6)-methyltransferase family. RsmA subfamily.

The protein resides in the cytoplasm. It catalyses the reaction adenosine(1518)/adenosine(1519) in 16S rRNA + 4 S-adenosyl-L-methionine = N(6)-dimethyladenosine(1518)/N(6)-dimethyladenosine(1519) in 16S rRNA + 4 S-adenosyl-L-homocysteine + 4 H(+). Its function is as follows. Specifically dimethylates two adjacent adenosines (A1518 and A1519) in the loop of a conserved hairpin near the 3'-end of 16S rRNA in the 30S particle. May play a critical role in biogenesis of 30S subunits. In Chelativorans sp. (strain BNC1), this protein is Ribosomal RNA small subunit methyltransferase A.